We begin with the raw amino-acid sequence, 784 residues long: 5-methyltetrahydropteroyltriglutamate--homocysteine methyltransferase (784 aa).

5-methyltetrahydropteroyltri-L-glutamate contacts are provided by residues 16–19 and Lys-112; that span reads RELK. Residues 460–462 and Glu-513 contribute to the L-homocysteine site; that span reads IGS. L-methionine-binding positions include 460–462 and Glu-513; that span reads IGS. Trp-590 is a binding site for 5-methyltetrahydropteroyltri-L-glutamate. An L-homocysteine-binding site is contributed by Asp-628. Asp-628 is a binding site for L-methionine. Position 634 (Glu-634) interacts with 5-methyltetrahydropteroyltri-L-glutamate. Positions 670, 672, and 694 each coordinate Zn(2+). His-723 acts as the Proton donor in catalysis. Cys-755 is a binding site for Zn(2+).

The protein belongs to the vitamin-B12 independent methionine synthase family. Requires Zn(2+) as cofactor.

It catalyses the reaction 5-methyltetrahydropteroyltri-L-glutamate + L-homocysteine = tetrahydropteroyltri-L-glutamate + L-methionine. Its pathway is amino-acid biosynthesis; L-methionine biosynthesis via de novo pathway; L-methionine from L-homocysteine (MetE route): step 1/1. In terms of biological role, catalyzes the transfer of a methyl group from 5-methyltetrahydrofolate to homocysteine resulting in methionine formation. This chain is 5-methyltetrahydropteroyltriglutamate--homocysteine methyltransferase, found in Acidithiobacillus ferrooxidans (strain ATCC 23270 / DSM 14882 / CIP 104768 / NCIMB 8455) (Ferrobacillus ferrooxidans (strain ATCC 23270)).